Here is a 394-residue protein sequence, read N- to C-terminus: AIAAVITFLILFTIFGNALVILAVLTSRSLRAPQNLFLVSLAAADILVATLIIPFSLANELLGYWYFRRTWCEVYLALDVLFCTSSIVHLCAISLDRYWAVSRALEYNCKRTPRRIKCIILTVWLIAAAISLPPLIYKGDQGPQPHGAPQCKLNQEAWYILSSSLGSFFVPCLIMILVYLRIYLIAKRSHRRGPRAKGGPGEGESRQACPVPGGPSASAKLPTLATPVASASEANGPSKPAGEKEEGETPEDPGTQALPPGWATLPNSGQGQKEGVSGASLEEEAEEEEEEEEEEDEPQAVPVSPASVGSPPLQQPQGSRVLATLRGQVLVGRGVGAMSGQWWRRRAQLSREKRFTFVLAVVIGVFVLCWFPFFFSYSLSAICPQQCRVPHGLF.

The helical transmembrane segment at 1–25 (AIAAVITFLILFTIFGNALVILAVL) threads the bilayer. At 26 to 36 (TSRSLRAPQNL) the chain is on the cytoplasmic side. A helical transmembrane segment spans residues 37 to 62 (FLVSLAAADILVATLIIPFSLANELL). Over 63-72 (GYWYFRRTWC) the chain is Extracellular. A disulfide bridge connects residues cysteine 72 and cysteine 151. Residues 73–95 (EVYLALDVLFCTSSIVHLCAISL) form a helical membrane-spanning segment. Topologically, residues 96–117 (DRYWAVSRALEYNCKRTPRRIK) are cytoplasmic. Residues 118–140 (CIILTVWLIAAAISLPPLIYKGD) traverse the membrane as a helical segment. Over 141–156 (QGPQPHGAPQCKLNQE) the chain is Extracellular. Residues 157–180 (AWYILSSSLGSFFVPCLIMILVYL) traverse the membrane as a helical segment. At 181 to 358 (RIYLIAKRSH…LSREKRFTFV (178 aa)) the chain is on the cytoplasmic side. The segment at 191-318 (RRGPRAKGGP…GSPPLQQPQG (128 aa)) is disordered. Over residues 281-298 (LEEEAEEEEEEEEEEDEP) the composition is skewed to acidic residues. Positions 299-312 (QAVPVSPASVGSPP) are enriched in low complexity. Residues 359 to 382 (LAVVIGVFVLCWFPFFFSYSLSAI) traverse the membrane as a helical segment. At 383–391 (CPQQCRVPH) the chain is on the extracellular side. A helical transmembrane segment spans residues 392-394 (GLF).

This sequence belongs to the G-protein coupled receptor 1 family. Adrenergic receptor subfamily. ADRA2B sub-subfamily. In terms of assembly, interacts with RAB26. Interacts with PPP1R9B. Interacts with GGA1, GGA2 and GGA3.

Its subcellular location is the cell membrane. Functionally, alpha-2 adrenergic receptors mediate the catecholamine-induced inhibition of adenylate cyclase through the action of G proteins. This is Alpha-2B adrenergic receptor (ADRA2B) from Oryctolagus cuniculus (Rabbit).